A 131-amino-acid chain; its full sequence is Small ribosomal subunit protein uS8 (131 aa).

It belongs to the universal ribosomal protein uS8 family. Part of the 30S ribosomal subunit. Contacts proteins S5 and S12.

In terms of biological role, one of the primary rRNA binding proteins, it binds directly to 16S rRNA central domain where it helps coordinate assembly of the platform of the 30S subunit. The polypeptide is Small ribosomal subunit protein uS8 (Cupriavidus metallidurans (strain ATCC 43123 / DSM 2839 / NBRC 102507 / CH34) (Ralstonia metallidurans)).